A 252-amino-acid polypeptide reads, in one-letter code: Triosephosphate isomerase (252 aa).

10 to 12 serves as a coordination point for substrate; that stretch reads NWK. The active-site Electrophile is H96. E168 acts as the Proton acceptor in catalysis. Residues G174, S214, and 235–236 contribute to the substrate site; that span reads GG.

It belongs to the triosephosphate isomerase family. As to quaternary structure, homodimer.

The protein localises to the cytoplasm. It carries out the reaction D-glyceraldehyde 3-phosphate = dihydroxyacetone phosphate. It participates in carbohydrate biosynthesis; gluconeogenesis. The protein operates within carbohydrate degradation; glycolysis; D-glyceraldehyde 3-phosphate from glycerone phosphate: step 1/1. In terms of biological role, involved in the gluconeogenesis. Catalyzes stereospecifically the conversion of dihydroxyacetone phosphate (DHAP) to D-glyceraldehyde-3-phosphate (G3P). The protein is Triosephosphate isomerase of Streptococcus mutans serotype c (strain ATCC 700610 / UA159).